A 487-amino-acid polypeptide reads, in one-letter code: Betaine aldehyde dehydrogenase (487 aa).

Residues serine 26, isoleucine 27, and aspartate 93 each coordinate K(+). 150 to 152 lines the NAD(+) pocket; the sequence is GAW. Lysine 162 functions as the Charge relay system in the catalytic mechanism. NAD(+) contacts are provided by residues 176–179 and 229–232; these read KPSE and SVPT. Residue leucine 244 coordinates K(+). Residue glutamate 250 is the Proton acceptor of the active site. Residues glycine 252, cysteine 284, and glutamate 384 each coordinate NAD(+). The active-site Nucleophile is the cysteine 284. Position 284 is a cysteine sulfenic acid (-SOH) (cysteine 284). The K(+) site is built by lysine 454 and glycine 457. The active-site Charge relay system is the glutamate 461.

Belongs to the aldehyde dehydrogenase family. In terms of assembly, dimer of dimers. K(+) is required as a cofactor.

The catalysed reaction is betaine aldehyde + NAD(+) + H2O = glycine betaine + NADH + 2 H(+). It participates in amine and polyamine biosynthesis; betaine biosynthesis via choline pathway; betaine from betaine aldehyde: step 1/1. In terms of biological role, involved in the biosynthesis of the osmoprotectant glycine betaine. Catalyzes the irreversible oxidation of betaine aldehyde to the corresponding acid. In Sinorhizobium fredii (strain NBRC 101917 / NGR234), this protein is Betaine aldehyde dehydrogenase.